The sequence spans 322 residues: Tyrosine recombinase XerC (322 aa).

In terms of domain architecture, Core-binding (CB) spans 14 to 104 (PDLREAAAAW…ALRSFARHLD (91 aa)). The Tyr recombinase domain occupies 125-311 (RLPRPLPVAA…DSARLLSAFD (187 aa)). Catalysis depends on residues Arg170, Lys195, His263, Arg266, and His289. Tyr298 serves as the catalytic O-(3'-phospho-DNA)-tyrosine intermediate.

This sequence belongs to the 'phage' integrase family. XerC subfamily. Forms a cyclic heterotetrameric complex composed of two molecules of XerC and two molecules of XerD.

It is found in the cytoplasm. Functionally, site-specific tyrosine recombinase, which acts by catalyzing the cutting and rejoining of the recombining DNA molecules. The XerC-XerD complex is essential to convert dimers of the bacterial chromosome into monomers to permit their segregation at cell division. It also contributes to the segregational stability of plasmids. The polypeptide is Tyrosine recombinase XerC (Methylobacterium nodulans (strain LMG 21967 / CNCM I-2342 / ORS 2060)).